The chain runs to 204 residues: Imidazole glycerol phosphate synthase subunit HisH (204 aa).

Positions 1 to 204 constitute a Glutamine amidotransferase type-1 domain; sequence MIKIVDYGLG…MTLLKNFSEI (204 aa). Residue Cys-80 is the Nucleophile of the active site. Active-site residues include His-186 and Glu-188.

Heterodimer of HisH and HisF.

The protein resides in the cytoplasm. It catalyses the reaction 5-[(5-phospho-1-deoxy-D-ribulos-1-ylimino)methylamino]-1-(5-phospho-beta-D-ribosyl)imidazole-4-carboxamide + L-glutamine = D-erythro-1-(imidazol-4-yl)glycerol 3-phosphate + 5-amino-1-(5-phospho-beta-D-ribosyl)imidazole-4-carboxamide + L-glutamate + H(+). It carries out the reaction L-glutamine + H2O = L-glutamate + NH4(+). It functions in the pathway amino-acid biosynthesis; L-histidine biosynthesis; L-histidine from 5-phospho-alpha-D-ribose 1-diphosphate: step 5/9. Functionally, IGPS catalyzes the conversion of PRFAR and glutamine to IGP, AICAR and glutamate. The HisH subunit catalyzes the hydrolysis of glutamine to glutamate and ammonia as part of the synthesis of IGP and AICAR. The resulting ammonia molecule is channeled to the active site of HisF. This chain is Imidazole glycerol phosphate synthase subunit HisH, found in Bdellovibrio bacteriovorus (strain ATCC 15356 / DSM 50701 / NCIMB 9529 / HD100).